A 492-amino-acid chain; its full sequence is Beclin 1-associated autophagy-related key regulator (492 aa).

At S29 the chain carries Phosphoserine. Positions 70–180 form a coiled coil; it reads RDRERFIDKK…KLGDLVEKKT (111 aa). Disordered regions lie at residues 213–232 and 411–473; these read TSGRDPADVSSETDSAMTSS and GVAG…AGGM. The segment covering 222–232 has biased composition (polar residues); the sequence is SSETDSAMTSS. Phosphoserine is present on S416. Over residues 424–433 the composition is skewed to acidic residues; that stretch reads VSDEETDLGT. Position 429 is a phosphothreonine (T429). Over residues 447 to 473 the composition is skewed to low complexity; sequence PSQPVEVSQSQSTQASPPIASSSAGGM.

It belongs to the ATG14 family. Forms homooligomers; homo-oligomerization is essential for the roles in membrane tethering and enhancement of SNARE-mediated fusion. Component of the PI3K (PI3KC3/PI3K-III/class III phosphatidylinositol 3-kinase) complex I (PI3KC3-C1) in which the core composed of the catalytic subunit PIK3C3, the regulatory subunit PIK3R4 and BECN1 is associated with ATG14. PI3KC3-C1 displays a V-shaped architecture with PIK3R4 serving as a bridge between PIK3C3 and the ATG14:BECN1 subcomplex. PI3KC3-C1 can associate with further regulatory subunits. Interacts with PIK3CB. Interacts (via coiled-coil domain) with BECN2 (via coiled-coil domain); this interaction is tighter than BECN2 self-association. Interacts with the STX17-SNAP29 binary t-SNARE complex. Interacts with NRBF2. Interacts with PIK3C3 and BECN1; this interaction is increased in the absence of TMEM39A. Interacts with STEEP1; the interaction is required for trafficking of STING1 from the endoplasmic reticulum. Interacts with ARMC3 (via ARM domains). Post-translationally, ubiquitinated via 'Lys-6', 'Lys-11' and 'Lys-63'-linked polyubiquitin chains on multiple lysines by MARCHF7, leading to ATG14 aggregation and loss of interaction with STX17.

It is found in the cytoplasm. The protein resides in the endoplasmic reticulum membrane. It localises to the preautophagosomal structure membrane. Required for both basal and inducible autophagy. Determines the localization of the autophagy-specific PI3-kinase complex. Plays a role in autophagosome formation and MAP1LC3/LC3 conjugation to phosphatidylethanolamine. Promotes BECN1 translocation from the trans-Golgi network to autophagosomes. Enhances PIK3C3 activity in a BECN1-dependent manner. Essential for the autophagy-dependent phosphorylation of BECN1. Stimulates the phosphorylation of BECN1, but suppresses the phosphorylation PIK3C3 by AMPK. Binds to STX17-SNAP29 binary t-SNARE complex on autophagosomes and primes it for VAMP8 interaction to promote autophagosome-endolysosome fusion. Modulates the hepatic lipid metabolism. The sequence is that of Beclin 1-associated autophagy-related key regulator from Rattus norvegicus (Rat).